A 129-amino-acid polypeptide reads, in one-letter code: Small ribosomal subunit protein uS11 (129 aa).

It belongs to the universal ribosomal protein uS11 family. As to quaternary structure, part of the 30S ribosomal subunit. Interacts with proteins S7 and S18. Binds to IF-3.

Located on the platform of the 30S subunit, it bridges several disparate RNA helices of the 16S rRNA. Forms part of the Shine-Dalgarno cleft in the 70S ribosome. This Bacillus anthracis (strain A0248) protein is Small ribosomal subunit protein uS11.